Consider the following 271-residue polypeptide: Ribosomal RNA small subunit methyltransferase A (271 aa).

Positions 11, 13, 38, 58, 86, and 101 each coordinate S-adenosyl-L-methionine.

Belongs to the class I-like SAM-binding methyltransferase superfamily. rRNA adenine N(6)-methyltransferase family. RsmA subfamily.

The protein resides in the cytoplasm. The enzyme catalyses adenosine(1518)/adenosine(1519) in 16S rRNA + 4 S-adenosyl-L-methionine = N(6)-dimethyladenosine(1518)/N(6)-dimethyladenosine(1519) in 16S rRNA + 4 S-adenosyl-L-homocysteine + 4 H(+). In terms of biological role, specifically dimethylates two adjacent adenosines (A1518 and A1519) in the loop of a conserved hairpin near the 3'-end of 16S rRNA in the 30S particle. May play a critical role in biogenesis of 30S subunits. This is Ribosomal RNA small subunit methyltransferase A from Helicobacter pylori (strain J99 / ATCC 700824) (Campylobacter pylori J99).